The sequence spans 198 residues: MKNDSLKGQHRINEQIRAKEVRIVGDDVESAVYPIAQALKMAEDHEADLVEISPNAVPPVCRIIDYSKFLYQLKKRQKEQKAKQVKVNVKEIRFGPQTDDHDYNFKLKHAIGFLQDGDKVKAYVFFKGRSILFKEQGEVLLLRFANDLEEYAKVEQMPLLEGKRMTISLAPKKAGSPKKAETDTAKKENPKKAVETKE.

The segment at 168–198 (SLAPKKAGSPKKAETDTAKKENPKKAVETKE) is disordered. The segment covering 178–198 (KKAETDTAKKENPKKAVETKE) has biased composition (basic and acidic residues).

It belongs to the IF-3 family. As to quaternary structure, monomer.

It is found in the cytoplasm. Functionally, IF-3 binds to the 30S ribosomal subunit and shifts the equilibrium between 70S ribosomes and their 50S and 30S subunits in favor of the free subunits, thus enhancing the availability of 30S subunits on which protein synthesis initiation begins. The sequence is that of Translation initiation factor IF-3 from Phocaeicola vulgatus (strain ATCC 8482 / DSM 1447 / JCM 5826 / CCUG 4940 / NBRC 14291 / NCTC 11154) (Bacteroides vulgatus).